The sequence spans 208 residues: Large ribosomal subunit protein uL4 (208 aa).

Residues 45–78 are disordered; it reads RQGTAKSKERSEMSGSTRKLGRQKGSGGARRGDI.

This sequence belongs to the universal ribosomal protein uL4 family. Part of the 50S ribosomal subunit.

One of the primary rRNA binding proteins, this protein initially binds near the 5'-end of the 23S rRNA. It is important during the early stages of 50S assembly. It makes multiple contacts with different domains of the 23S rRNA in the assembled 50S subunit and ribosome. In terms of biological role, forms part of the polypeptide exit tunnel. In Azobacteroides pseudotrichonymphae genomovar. CFP2, this protein is Large ribosomal subunit protein uL4.